The primary structure comprises 303 residues: Mitochondrial carrier homolog 2 (303 aa).

Residue alanine 2 is modified to N-acetylalanine. The Mitochondrial intermembrane portion of the chain corresponds to 2-15 (ADAASQVLLGSGLT). Solcar repeat units lie at residues 2–98 (ADAA…YQES) and 118–206 (DRVI…INTY). The chain crosses the membrane as a helical span at residues 16–36 (ILSQPLMYVKVLIQVGYEPLP). Residues 37–77 (PTIGRNIFGRQVCQLPGLFCYAQHIASIDGRRGLFTGLTPR) lie on the Cytoplasmic side of the membrane. Residues 78 to 92 (LCSGVLGTVVHGKVL) form a helical membrane-spanning segment. The Mitochondrial intermembrane segment spans residues 93-135 (QYYQESEKPEELGSVTVQKEYSSSFDRVIKETTREMIARSAAT). Residues 136–156 (LITHPFHVITLRSMVQFIGRE) traverse the membrane as a helical segment. Over 157–180 (SKYCGLCDSIVTIYREEGIVGFFA) the chain is Cytoplasmic. The chain crosses the membrane as a helical span at residues 181 to 199 (GLIPRLLGDIISLWLCNSL). Residues 200-231 (AYLINTYALDSGVSTMNEMKSYSQAVTGFFAS) are Mitochondrial intermembrane-facing. A helical membrane pass occupies residues 232–252 (MLTYPFVLVSNLMAVNNCGLA). Over 253 to 280 (GGSPPYSPIYTSWIDCWCMLQKAGNMSR) the chain is Cytoplasmic. A helical membrane pass occupies residues 281–303 (GNSLFFRKVPCGKTYCYDLRMLI).

This sequence belongs to the mitochondrial carrier (TC 2.A.29) family. As to quaternary structure, interacts with p15BID. Expressed in a wide variety of tissues. Predominant expressed in liver, kidney, heart, skeletal muscle and testis.

The protein resides in the mitochondrion outer membrane. Functionally, protein insertase that mediates insertion of transmembrane proteins into the mitochondrial outer membrane. Catalyzes insertion of proteins with alpha-helical transmembrane regions, such as signal-anchored, tail-anchored and multi-pass membrane proteins. Does not mediate insertion of beta-barrel transmembrane proteins. Also acts as a receptor for the truncated form of pro-apoptotic BH3-interacting domain death agonist (p15 BID) and has therefore a critical function in apoptosis. Regulates the quiescence/cycling of hematopoietic stem cells (HSCs). Acts as a regulator of mitochondrial fusion, essential for the naive-to-primed interconversion of embryonic stem cells (ESCs). Acts as a regulator of lipid homeostasis and has a regulatory role in adipocyte differentiation and biology. This Mus musculus (Mouse) protein is Mitochondrial carrier homolog 2.